Here is a 418-residue protein sequence, read N- to C-terminus: Actin-related protein 3 (418 aa).

Position 2 is an N-acetylalanine (Ala-2). 4 positions are modified to N6-acetyllysine: Lys-240, Lys-244, Lys-251, and Lys-254.

The protein belongs to the actin family. ARP3 subfamily. Component of the Arp2/3 complex composed of ACTR2/ARP2, ACTR3/ARP3, ARPC1B/p41-ARC, ARPC2/p34-ARC, ARPC3/p21-ARC, ARPC4/p20-ARC and ARPC5/p16-ARC. Interacts with WHDC1. Interacts weakly with MEFV. Interacts with AVIL. As to quaternary structure, (Microbial infection) Interacts with bacterium B.thailandensis BimA.

It localises to the cytoplasm. The protein resides in the cytoskeleton. Its subcellular location is the cell projection. The protein localises to the nucleus. Its function is as follows. ATP-binding component of the Arp2/3 complex, a multiprotein complex that mediates actin polymerization upon stimulation by nucleation-promoting factor (NPF). The Arp2/3 complex mediates the formation of branched actin networks in the cytoplasm, providing the force for cell motility. Seems to contact the pointed end of the daughter actin filament. In podocytes, required for the formation of lamellipodia downstream of AVIL and PLCE1 regulation. In addition to its role in the cytoplasmic cytoskeleton, the Arp2/3 complex also promotes actin polymerization in the nucleus, thereby regulating gene transcription and repair of damaged DNA. The Arp2/3 complex promotes homologous recombination (HR) repair in response to DNA damage by promoting nuclear actin polymerization, leading to drive motility of double-strand breaks (DSBs). Plays a role in ciliogenesis. This chain is Actin-related protein 3 (Actr3), found in Mus musculus (Mouse).